The chain runs to 200 residues: HTH-type transcriptional regulator BetI (200 aa).

One can recognise an HTH tetR-type domain in the interval S8 to L68. A DNA-binding region (H-T-H motif) is located at residues S31 to F50.

It participates in amine and polyamine biosynthesis; betaine biosynthesis via choline pathway [regulation]. In terms of biological role, repressor involved in the biosynthesis of the osmoprotectant glycine betaine. It represses transcription of the choline transporter BetT and the genes of BetAB involved in the synthesis of glycine betaine. This is HTH-type transcriptional regulator BetI from Proteus mirabilis (strain HI4320).